We begin with the raw amino-acid sequence, 43 residues long: SCAGSCKCKNCRCRSCRKSCCSCCPAGCNNCVKGCVCKEPASS.

The tract at residues 1-16 (SCAGSCKCKNCRCRSC) is beta. 14 residues coordinate a divalent metal cation: Cys2, Cys6, Cys8, Cys11, Cys13, Cys16, Cys20, Cys21, Cys23, Cys24, Cys28, Cys31, Cys35, and Cys37. Residues 17-43 (RKSCCSCCPAGCNNCVKGCVCKEPASS) are alpha.

It belongs to the metallothionein superfamily. Type 1 family.

Functionally, metallothioneins have a high content of cysteine residues that bind various heavy metals. This is Metallothionein B from Colinus virginianus (Northern bobwhite).